Consider the following 206-residue polypeptide: Large ribosomal subunit protein uL4 (206 aa).

The tract at residues 49-73 is disordered; the sequence is KTKTISEISGTTKKPFAQKGGGRAR.

Belongs to the universal ribosomal protein uL4 family. Part of the 50S ribosomal subunit.

One of the primary rRNA binding proteins, this protein initially binds near the 5'-end of the 23S rRNA. It is important during the early stages of 50S assembly. It makes multiple contacts with different domains of the 23S rRNA in the assembled 50S subunit and ribosome. Its function is as follows. Forms part of the polypeptide exit tunnel. The chain is Large ribosomal subunit protein uL4 from Paramagnetospirillum magneticum (strain ATCC 700264 / AMB-1) (Magnetospirillum magneticum).